Consider the following 106-residue polypeptide: Large ribosomal subunit protein uL24 (106 aa).

This sequence belongs to the universal ribosomal protein uL24 family. In terms of assembly, part of the 50S ribosomal subunit.

Its function is as follows. One of two assembly initiator proteins, it binds directly to the 5'-end of the 23S rRNA, where it nucleates assembly of the 50S subunit. Functionally, one of the proteins that surrounds the polypeptide exit tunnel on the outside of the subunit. The chain is Large ribosomal subunit protein uL24 from Orientia tsutsugamushi (strain Boryong) (Rickettsia tsutsugamushi).